We begin with the raw amino-acid sequence, 184 residues long: NADH-quinone oxidoreductase subunit B (184 aa).

[4Fe-4S] cluster-binding residues include Cys-37, Cys-38, Cys-103, and Cys-132.

The protein belongs to the complex I 20 kDa subunit family. NDH-1 is composed of 14 different subunits. Subunits NuoB, C, D, E, F, and G constitute the peripheral sector of the complex. [4Fe-4S] cluster is required as a cofactor.

The protein resides in the cell membrane. It carries out the reaction a quinone + NADH + 5 H(+)(in) = a quinol + NAD(+) + 4 H(+)(out). NDH-1 shuttles electrons from NADH, via FMN and iron-sulfur (Fe-S) centers, to quinones in the respiratory chain. The immediate electron acceptor for the enzyme in this species is believed to be a menaquinone. Couples the redox reaction to proton translocation (for every two electrons transferred, four hydrogen ions are translocated across the cytoplasmic membrane), and thus conserves the redox energy in a proton gradient. The polypeptide is NADH-quinone oxidoreductase subunit B (Rhodococcus erythropolis (strain PR4 / NBRC 100887)).